Consider the following 625-residue polypeptide: Interleukin-1 receptor-associated kinase-like 2 (625 aa).

In terms of domain architecture, Death spans 13–94 (LDDPCRNMDA…RAAQIILNWK (82 aa)). The segment at 111–181 (KPEKPLAASV…SSDSKDFSTS (71 aa)) is disordered. At serine 144 the chain carries Phosphoserine. Polar residues predominate over residues 169–181 (LPTSSDSKDFSTS). Residues 210–503 (FNQNHKISQG…GSVAAVEEWL (294 aa)) form the Protein kinase domain. ATP is bound by residues 216–224 (ISQGTFADV), lysine 237, and 337–340 (KSSN). Residues 513–539 (SGLSEGTGSSSNTPEETDDVDNSSLDA) form a disordered region. Residues 516–526 (SEGTGSSSNTP) are compositionally biased toward polar residues.

This sequence belongs to the protein kinase superfamily. TKL Ser/Thr protein kinase family. Pelle subfamily. Interacts with MYD88. IL-1 stimulation leads to the formation of a signaling complex which dissociates from the IL-1 receptor following the binding of PELI1.

Binds to the IL-1 type I receptor following IL-1 engagement, triggering intracellular signaling cascades leading to transcriptional up-regulation and mRNA stabilization. The polypeptide is Interleukin-1 receptor-associated kinase-like 2 (IRAK2) (Pongo abelii (Sumatran orangutan)).